A 357-amino-acid chain; its full sequence is Peptide chain release factor 1 (357 aa).

N5-methylglutamine is present on Gln236.

It belongs to the prokaryotic/mitochondrial release factor family. Methylated by PrmC. Methylation increases the termination efficiency of RF1.

The protein resides in the cytoplasm. Its function is as follows. Peptide chain release factor 1 directs the termination of translation in response to the peptide chain termination codons UAG and UAA. This is Peptide chain release factor 1 from Mycobacterium avium (strain 104).